The chain runs to 232 residues: Large ribosomal subunit protein uL1 (232 aa).

It belongs to the universal ribosomal protein uL1 family. Part of the 50S ribosomal subunit.

In terms of biological role, binds directly to 23S rRNA. The L1 stalk is quite mobile in the ribosome, and is involved in E site tRNA release. Protein L1 is also a translational repressor protein, it controls the translation of the L11 operon by binding to its mRNA. This Cereibacter sphaeroides (strain ATCC 17029 / ATH 2.4.9) (Rhodobacter sphaeroides) protein is Large ribosomal subunit protein uL1.